A 401-amino-acid polypeptide reads, in one-letter code: Multidrug resistance protein MdtH (401 aa).

11 consecutive transmembrane segments (helical) span residues Tyr-13–Ile-33, Ser-34–Leu-54, Ile-88–Leu-108, Ile-139–Leu-159, Phe-164–Trp-184, Phe-211–Met-231, Tyr-248–Met-268, Glu-275–Val-295, Leu-298–Ala-318, Leu-341–Gly-361, and Phe-366–Tyr-386.

It belongs to the major facilitator superfamily. DHA1 family. MdtH (TC 2.A.1.2.21) subfamily.

Its subcellular location is the cell inner membrane. The polypeptide is Multidrug resistance protein MdtH (Blochmanniella floridana).